Reading from the N-terminus, the 1158-residue chain is ATP-dependent helicase/deoxyribonuclease subunit B (1158 aa).

In terms of domain architecture, UvrD-like helicase ATP-binding spans 1–275; that stretch reads MTLHAYLGRA…QYFNQLYRFN (275 aa). Position 8–15 (8–15) interacts with ATP; that stretch reads GRAGTGKS. Positions 269–583 constitute a UvrD-like helicase C-terminal domain; the sequence is NQLYRFNNQD…SIGTMDLAKV (315 aa). The [4Fe-4S] cluster site is built by C784, C1112, C1115, and C1121.

This sequence belongs to the helicase family. AddB/RexB type 1 subfamily. As to quaternary structure, heterodimer of AddA and AddB. It depends on Mg(2+) as a cofactor. [4Fe-4S] cluster is required as a cofactor.

Its function is as follows. The heterodimer acts as both an ATP-dependent DNA helicase and an ATP-dependent, dual-direction single-stranded exonuclease. Recognizes the chi site generating a DNA molecule suitable for the initiation of homologous recombination. The AddB subunit has 5' -&gt; 3' nuclease activity but not helicase activity. This Staphylococcus aureus (strain COL) protein is ATP-dependent helicase/deoxyribonuclease subunit B.